Here is a 577-residue protein sequence, read N- to C-terminus: 2-succinyl-5-enolpyruvyl-6-hydroxy-3-cyclohexene-1-carboxylate synthase (577 aa).

It belongs to the TPP enzyme family. MenD subfamily. In terms of assembly, homodimer. It depends on Mg(2+) as a cofactor. Mn(2+) serves as cofactor. The cofactor is thiamine diphosphate.

It carries out the reaction isochorismate + 2-oxoglutarate + H(+) = 5-enolpyruvoyl-6-hydroxy-2-succinyl-cyclohex-3-ene-1-carboxylate + CO2. It participates in quinol/quinone metabolism; 1,4-dihydroxy-2-naphthoate biosynthesis; 1,4-dihydroxy-2-naphthoate from chorismate: step 2/7. The protein operates within cofactor biosynthesis; phylloquinone biosynthesis. In terms of biological role, catalyzes the thiamine diphosphate-dependent decarboxylation of 2-oxoglutarate and the subsequent addition of the resulting succinic semialdehyde-thiamine pyrophosphate anion to isochorismate to yield 2-succinyl-5-enolpyruvyl-6-hydroxy-3-cyclohexene-1-carboxylate (SEPHCHC). The chain is 2-succinyl-5-enolpyruvyl-6-hydroxy-3-cyclohexene-1-carboxylate synthase from Synechococcus sp. (strain CC9311).